The primary structure comprises 413 residues: Multifunctional CCA protein (413 aa).

Residues Gly8 and Arg11 each contribute to the ATP site. The CTP site is built by Gly8 and Arg11. Positions 21 and 23 each coordinate Mg(2+). ATP is bound by residues Arg91, Arg143, and Arg146. Arg91, Arg143, and Arg146 together coordinate CTP. Positions 232–333 (TGVHVMMVID…VRLLERADAL (102 aa)) constitute an HD domain.

The protein belongs to the tRNA nucleotidyltransferase/poly(A) polymerase family. Bacterial CCA-adding enzyme type 1 subfamily. In terms of assembly, monomer. Can also form homodimers and oligomers. Mg(2+) serves as cofactor. It depends on Ni(2+) as a cofactor.

It carries out the reaction a tRNA precursor + 2 CTP + ATP = a tRNA with a 3' CCA end + 3 diphosphate. It catalyses the reaction a tRNA with a 3' CCA end + 2 CTP + ATP = a tRNA with a 3' CCACCA end + 3 diphosphate. Functionally, catalyzes the addition and repair of the essential 3'-terminal CCA sequence in tRNAs without using a nucleic acid template. Adds these three nucleotides in the order of C, C, and A to the tRNA nucleotide-73, using CTP and ATP as substrates and producing inorganic pyrophosphate. tRNA 3'-terminal CCA addition is required both for tRNA processing and repair. Also involved in tRNA surveillance by mediating tandem CCA addition to generate a CCACCA at the 3' terminus of unstable tRNAs. While stable tRNAs receive only 3'-terminal CCA, unstable tRNAs are marked with CCACCA and rapidly degraded. The chain is Multifunctional CCA protein from Burkholderia pseudomallei (strain 668).